The primary structure comprises 481 residues: Inosine-5'-monophosphate dehydrogenase (481 aa).

2 CBS domains span residues 92–148 (VIND…SKKV) and 152–209 (MTKM…PEAN). NAD(+)-binding positions include D244 and 293-295 (GIG). The K(+) site is built by G295 and G297. S298 provides a ligand contact to IMP. Position 300 (C300) interacts with K(+). C300 (thioimidate intermediate) is an active-site residue. IMP-binding positions include 333–335 (DGG), 356–357 (GS), and 380–384 (YRGMG). The active-site Proton acceptor is R396. E410 contacts IMP. K(+) is bound by residues E464, S465, and H466.

Belongs to the IMPDH/GMPR family. Homotetramer. The cofactor is K(+).

The catalysed reaction is IMP + NAD(+) + H2O = XMP + NADH + H(+). It functions in the pathway purine metabolism; XMP biosynthesis via de novo pathway; XMP from IMP: step 1/1. With respect to regulation, mycophenolic acid (MPA) is a non-competitive inhibitor that prevents formation of the closed enzyme conformation by binding to the same site as the amobile flap. In contrast, mizoribine monophosphate (MZP) is a competitive inhibitor that induces the closed conformation. MPA is a potent inhibitor of mammalian IMPDHs but a poor inhibitor of the bacterial enzymes. MZP is a more potent inhibitor of bacterial IMPDH. Functionally, catalyzes the conversion of inosine 5'-phosphate (IMP) to xanthosine 5'-phosphate (XMP), the first committed and rate-limiting step in the de novo synthesis of guanine nucleotides, and therefore plays an important role in the regulation of cell growth. The chain is Inosine-5'-monophosphate dehydrogenase from Helicobacter pylori (strain ATCC 700392 / 26695) (Campylobacter pylori).